We begin with the raw amino-acid sequence, 1212 residues long: DNA-directed RNA polymerase subunit beta' (1212 aa).

4 residues coordinate Zn(2+): Cys60, Cys62, Cys75, and Cys78. Residues Asp450, Asp452, and Asp454 each coordinate Mg(2+). The Zn(2+) site is built by Cys819, Cys893, Cys900, and Cys903.

Belongs to the RNA polymerase beta' chain family. The RNAP catalytic core consists of 2 alpha, 1 beta, 1 beta' and 1 omega subunit. When a sigma factor is associated with the core the holoenzyme is formed, which can initiate transcription. Requires Mg(2+) as cofactor. Zn(2+) is required as a cofactor.

The enzyme catalyses RNA(n) + a ribonucleoside 5'-triphosphate = RNA(n+1) + diphosphate. Functionally, DNA-dependent RNA polymerase catalyzes the transcription of DNA into RNA using the four ribonucleoside triphosphates as substrates. This chain is DNA-directed RNA polymerase subunit beta', found in Streptococcus thermophilus (strain CNRZ 1066).